The following is a 340-amino-acid chain: Putative pyridoxal kinase C18.10 (340 aa).

The substrate site is built by S19 and Y130. Residues 189–190 (TS) and 218–230 (QFPSLSGVFTGTG) each bind ATP. D231 lines the substrate pocket.

This sequence belongs to the pyridoxine kinase family. The cofactor is a divalent metal cation.

It is found in the cytoplasm. It localises to the nucleus. It carries out the reaction pyridoxal + ATP = pyridoxal 5'-phosphate + ADP + H(+). In terms of biological role, required for synthesis of pyridoxal-5-phosphate from vitamin B6. This Schizosaccharomyces pombe (strain 972 / ATCC 24843) (Fission yeast) protein is Putative pyridoxal kinase C18.10.